Here is a 500-residue protein sequence, read N- to C-terminus: L-arabinose isomerase (500 aa).

Mn(2+)-binding residues include Glu306, Glu333, His350, and His450.

This sequence belongs to the arabinose isomerase family. As to quaternary structure, homohexamer. Mn(2+) serves as cofactor.

The catalysed reaction is beta-L-arabinopyranose = L-ribulose. The protein operates within carbohydrate degradation; L-arabinose degradation via L-ribulose; D-xylulose 5-phosphate from L-arabinose (bacterial route): step 1/3. In terms of biological role, catalyzes the conversion of L-arabinose to L-ribulose. This chain is L-arabinose isomerase, found in Escherichia coli O17:K52:H18 (strain UMN026 / ExPEC).